The following is a 1056-amino-acid chain: Carbamoyl phosphate synthase large chain (1056 aa).

Positions Met-1–Asp-398 are carboxyphosphate synthetic domain. 12 residues coordinate ATP: Arg-127, Arg-167, Gly-173, Gly-174, Glu-206, Val-208, Glu-213, Gly-239, Val-240, His-241, Gln-282, and Glu-295. The ATP-grasp 1 domain occupies Arg-131–Ile-324. Mg(2+)-binding residues include Gln-282, Glu-295, and Asn-297. Mn(2+)-binding residues include Gln-282, Glu-295, and Asn-297. The interval Thr-399–Val-532 is oligomerization domain. The carbamoyl phosphate synthetic domain stretch occupies residues Thr-533–Arg-921. The ATP-grasp 2 domain maps to Ser-663–Met-854. Arg-699, Arg-738, Leu-740, Glu-745, Gly-770, Val-771, His-772, Ser-773, Gln-813, and Glu-825 together coordinate ATP. Positions 813, 825, and 827 each coordinate Mg(2+). 3 residues coordinate Mn(2+): Gln-813, Glu-825, and Asn-827. The MGS-like domain occupies Asn-920–Arg-1056. The interval Leu-922 to Arg-1056 is allosteric domain.

The protein belongs to the CarB family. As to quaternary structure, composed of two chains; the small (or glutamine) chain promotes the hydrolysis of glutamine to ammonia, which is used by the large (or ammonia) chain to synthesize carbamoyl phosphate. Tetramer of heterodimers (alpha,beta)4. It depends on Mg(2+) as a cofactor. Mn(2+) serves as cofactor.

It catalyses the reaction hydrogencarbonate + L-glutamine + 2 ATP + H2O = carbamoyl phosphate + L-glutamate + 2 ADP + phosphate + 2 H(+). The catalysed reaction is hydrogencarbonate + NH4(+) + 2 ATP = carbamoyl phosphate + 2 ADP + phosphate + 2 H(+). It participates in amino-acid biosynthesis; L-arginine biosynthesis; carbamoyl phosphate from bicarbonate: step 1/1. Its pathway is pyrimidine metabolism; UMP biosynthesis via de novo pathway; (S)-dihydroorotate from bicarbonate: step 1/3. Large subunit of the glutamine-dependent carbamoyl phosphate synthetase (CPSase). CPSase catalyzes the formation of carbamoyl phosphate from the ammonia moiety of glutamine, carbonate, and phosphate donated by ATP, constituting the first step of 2 biosynthetic pathways, one leading to arginine and/or urea and the other to pyrimidine nucleotides. The large subunit (synthetase) binds the substrates ammonia (free or transferred from glutamine from the small subunit), hydrogencarbonate and ATP and carries out an ATP-coupled ligase reaction, activating hydrogencarbonate by forming carboxy phosphate which reacts with ammonia to form carbamoyl phosphate. In Methanospirillum hungatei JF-1 (strain ATCC 27890 / DSM 864 / NBRC 100397 / JF-1), this protein is Carbamoyl phosphate synthase large chain.